The sequence spans 298 residues: Probable phosphoserine phosphatase (298 aa).

The active-site Nucleophile is the Asp82. The Mg(2+) site is built by Asp82 and Asp84. Asp84 (proton donor) is an active-site residue. Residues Glu91, Arg127, 170–171, and Lys217 contribute to the substrate site; that span reads SG. Asp240 is a Mg(2+) binding site. Asn243 is a substrate binding site.

The protein belongs to the HAD-like hydrolase superfamily. SerB family. The cofactor is Mg(2+).

The catalysed reaction is O-phospho-L-serine + H2O = L-serine + phosphate. It carries out the reaction O-phospho-D-serine + H2O = D-serine + phosphate. Its pathway is amino-acid biosynthesis; L-serine biosynthesis; L-serine from 3-phospho-D-glycerate: step 3/3. The sequence is that of Probable phosphoserine phosphatase from Schizosaccharomyces pombe (strain 972 / ATCC 24843) (Fission yeast).